Reading from the N-terminus, the 923-residue chain is Protein prickle (923 aa).

Positions 1 to 196 (MSYPYQKSHH…HPFHSPASAA (196 aa)) are disordered. The span at 11–34 (QTQQPQQNGHPQHQLMLQQQQQAD) shows a compositional bias: low complexity. Positions 37 to 49 (PHHHHHHHVHHAT) are enriched in basic residues. Composition is skewed to low complexity over residues 59–73 (RSPL…LYSG) and 106–118 (MPGM…PPGM). Residues 122–134 (LGGGGGGGGGGSA) show a composition bias toward gly residues. 2 stretches are compositionally biased toward low complexity: residues 152–169 (STVT…SARS) and 184–196 (SSHH…ASAA). A PET domain is found at 275-383 (GGGHNYSQSD…TVKQITTTLI (109 aa)). LIM zinc-binding domains are found at residues 382–446 (LICE…ETLK), 447–507 (PRCS…MFAE), and 508–570 (YCDY…GEPP). 2 disordered regions span residues 571–668 (TPSD…LDLT) and 703–867 (GPIA…SSAD). Over residues 709-718 (NGNGPTGGGP) the composition is skewed to gly residues. Over residues 738–748 (ESPSFSGTNSP) the composition is skewed to polar residues. A compositionally biased stretch (basic and acidic residues) spans 777–786 (HSIKEVRFEG). The segment covering 792-805 (LPRTKSYCQRNGGQ) has biased composition (polar residues). The span at 817 to 827 (SDDDELAEDET) shows a compositional bias: acidic residues. Residues 840–852 (QREQQRPVDDSDA) show a composition bias toward basic and acidic residues. A compositionally biased stretch (low complexity) spans 853–865 (RSVCSTCSSSSSS).

The protein belongs to the prickle / espinas / testin family. Interacts with dsh; PET and LIM domains interact with dsh DEP domain, in wing cells. Interacts with Vang in photoreceptor cells.

It is found in the cell membrane. In terms of biological role, acts in a planar cell polarity (PCP) complex; polarization along the apical/basal axis of epithelial cells. PCP signaling in the wing disk requires the receptor fz and the cytoplasmic proteins dsh and pk. These act in a feedback loop leading to activation of the jnk cascade and subsequent polarized arrangement of hairs and bristles. Dgo and pk compete with one another for dsh binding, thereby modulating fz dsh activity and ensuring tight control over fz PCP signaling. Vang, stan and pk function together to regulate the establishment of tissue polarity in the adult eye. The sequence is that of Protein prickle from Anopheles gambiae (African malaria mosquito).